The primary structure comprises 153 residues: Small ribosomal subunit protein uS13 (153 aa).

Residues valine 132–lysine 153 form a disordered region. Residues glutamine 135–lysine 153 are compositionally biased toward basic residues.

It belongs to the universal ribosomal protein uS13 family. In terms of assembly, part of the 30S ribosomal subunit. Forms a loose heterodimer with protein S19. Forms two bridges to the 50S subunit in the 70S ribosome.

Functionally, located at the top of the head of the 30S subunit, it contacts several helices of the 16S rRNA. In the 70S ribosome it contacts the 23S rRNA (bridge B1a) and protein L5 of the 50S subunit (bridge B1b), connecting the 2 subunits; these bridges are implicated in subunit movement. This is Small ribosomal subunit protein uS13 from Nanoarchaeum equitans (strain Kin4-M).